We begin with the raw amino-acid sequence, 127 residues long: Large ribosomal subunit protein bL20 (127 aa).

This sequence belongs to the bacterial ribosomal protein bL20 family.

In terms of biological role, binds directly to 23S ribosomal RNA and is necessary for the in vitro assembly process of the 50S ribosomal subunit. It is not involved in the protein synthesizing functions of that subunit. This is Large ribosomal subunit protein bL20 from Corynebacterium urealyticum (strain ATCC 43042 / DSM 7109).